The primary structure comprises 159 residues: Protein Smg homolog (159 aa).

The protein belongs to the Smg family.

The polypeptide is Protein Smg homolog (Shewanella amazonensis (strain ATCC BAA-1098 / SB2B)).